We begin with the raw amino-acid sequence, 369 residues long: Phosphoribosylformylglycinamidine cyclo-ligase (369 aa).

Residues 1–22 (MSKRDTSQPKTGQPKTSKRRNG) form a disordered region.

It belongs to the AIR synthase family.

The protein resides in the cytoplasm. It carries out the reaction 2-formamido-N(1)-(5-O-phospho-beta-D-ribosyl)acetamidine + ATP = 5-amino-1-(5-phospho-beta-D-ribosyl)imidazole + ADP + phosphate + H(+). It participates in purine metabolism; IMP biosynthesis via de novo pathway; 5-amino-1-(5-phospho-D-ribosyl)imidazole from N(2)-formyl-N(1)-(5-phospho-D-ribosyl)glycinamide: step 2/2. The sequence is that of Phosphoribosylformylglycinamidine cyclo-ligase from Mesorhizobium japonicum (strain LMG 29417 / CECT 9101 / MAFF 303099) (Mesorhizobium loti (strain MAFF 303099)).